Reading from the N-terminus, the 96-residue chain is Large ribosomal subunit protein eL21 (96 aa).

This sequence belongs to the eukaryotic ribosomal protein eL21 family.

This chain is Large ribosomal subunit protein eL21, found in Methanothrix thermoacetophila (strain DSM 6194 / JCM 14653 / NBRC 101360 / PT) (Methanosaeta thermophila).